Reading from the N-terminus, the 762-residue chain is Probable disease resistance protein At1g61300 (762 aa).

G2 carries N-myristoyl glycine lipidation. S-palmitoyl cysteine attachment occurs at residues C3 and C4. The NB-ARC domain maps to 26–329; that stretch reads NINRNSFGVE…CEGFIGEDQV (304 aa). 68–75 is an ATP binding site; that stretch reads GMGGVGKT. LRR repeat units follow at residues 401–422, 423–444, 447–470, 471–493, and 494–516; these read AVRRMSLMDNHIEEITCESKCS, ELTTLFLQSNQLKNLSGEFIRY, KLVVLDLSYNRDFNKLPEQISGLV, SLQFLDLSNTSIKQLPVGLKKLK, and KLTFLNLAYTVRLCSISGISRLL.

It belongs to the disease resistance NB-LRR family.

The protein localises to the cell membrane. In terms of biological role, probable disease resistance protein. This chain is Probable disease resistance protein At1g61300, found in Arabidopsis thaliana (Mouse-ear cress).